Consider the following 89-residue polypeptide: Phosphocarrier protein HPr (89 aa).

Residues 1-88 form the HPr domain; that stretch reads MLQRDTTIIN…ALIANRFGEG (88 aa). H15 (pros-phosphohistidine intermediate) is an active-site residue.

The protein belongs to the HPr family.

It is found in the cytoplasm. Its function is as follows. General (non sugar-specific) component of the phosphoenolpyruvate-dependent sugar phosphotransferase system (sugar PTS). This major carbohydrate active-transport system catalyzes the phosphorylation of incoming sugar substrates concomitantly with their translocation across the cell membrane. The phosphoryl group from phosphoenolpyruvate (PEP) is transferred to the phosphoryl carrier protein HPr by enzyme I. Phospho-HPr then transfers it to the PTS EIIA domain. The protein is Phosphocarrier protein HPr (phbH) of Cupriavidus necator (strain ATCC 17699 / DSM 428 / KCTC 22496 / NCIMB 10442 / H16 / Stanier 337) (Ralstonia eutropha).